Consider the following 310-residue polypeptide: GMP synthase [glutamine-hydrolyzing] subunit B (310 aa).

The region spanning 2 to 185 (FKTEPFIEES…LGLPDQIAHR (184 aa)) is the GMPS ATP-PPase domain. Position 29–35 (29–35 (SGGVDSA)) interacts with ATP.

Heterodimer composed of a glutamine amidotransferase subunit (A) and a GMP-binding subunit (B).

The enzyme catalyses XMP + L-glutamine + ATP + H2O = GMP + L-glutamate + AMP + diphosphate + 2 H(+). It participates in purine metabolism; GMP biosynthesis; GMP from XMP (L-Gln route): step 1/1. Its function is as follows. Catalyzes the synthesis of GMP from XMP. The protein is GMP synthase [glutamine-hydrolyzing] subunit B of Methanococcus maripaludis (strain DSM 14266 / JCM 13030 / NBRC 101832 / S2 / LL).